Reading from the N-terminus, the 461-residue chain is Cysteine--tRNA ligase (461 aa).

A Zn(2+)-binding site is contributed by Cys28. Positions 30 to 40 (ITVYDLCHIGH) match the 'HIGH' region motif. Zn(2+) contacts are provided by Cys209, His234, and Glu238. The 'KMSKS' region motif lies at 266-270 (KMSKS). Residue Lys269 coordinates ATP.

The protein belongs to the class-I aminoacyl-tRNA synthetase family. Monomer. The cofactor is Zn(2+).

The protein resides in the cytoplasm. The enzyme catalyses tRNA(Cys) + L-cysteine + ATP = L-cysteinyl-tRNA(Cys) + AMP + diphosphate. In Cronobacter sakazakii (strain ATCC BAA-894) (Enterobacter sakazakii), this protein is Cysteine--tRNA ligase.